The primary structure comprises 133 residues: Probable 4-amino-4-deoxy-L-arabinose-phosphoundecaprenol flippase subunit ArnF (133 aa).

Topologically, residues 1–5 (MKTGY) are cytoplasmic. Residues 6–26 (LWAIASALLVTVAQLLLKIGM) form a helical membrane-spanning segment. Over 27–47 (SELPDLQLEKQWFDLHWLWAN) the chain is Periplasmic. The chain crosses the membrane as a helical span at residues 48–68 (IIPISVVFVGLIGYVLSMVCW). Positions 51-125 (ISVVFVGLIG…IMLGVWLISQ (75 aa)) constitute an EamA domain. At 69–80 (LLTLRTIPLNKA) the chain is on the cytoplasmic side. The chain crosses the membrane as a helical span at residues 81–101 (YPLISLSYVFVYILAVVLPWF). Over 102–103 (QE) the chain is Periplasmic. A helical membrane pass occupies residues 104-124 (TLSWSKTIGIIFIMLGVWLIS). The Cytoplasmic segment spans residues 125-133 (QKTEQTTSH).

It belongs to the ArnF family. As to quaternary structure, heterodimer of ArnE and ArnF.

It is found in the cell inner membrane. The protein operates within bacterial outer membrane biogenesis; lipopolysaccharide biosynthesis. Functionally, translocates 4-amino-4-deoxy-L-arabinose-phosphoundecaprenol (alpha-L-Ara4N-phosphoundecaprenol) from the cytoplasmic to the periplasmic side of the inner membrane. This chain is Probable 4-amino-4-deoxy-L-arabinose-phosphoundecaprenol flippase subunit ArnF, found in Proteus mirabilis (strain HI4320).